The primary structure comprises 70 residues: Gene 4.3 protein (70 aa).

In Escherichia coli (Bacteriophage T3), this protein is Gene 4.3 protein (4.3).